A 261-amino-acid polypeptide reads, in one-letter code: Immediate-early protein IE-0 (261 aa).

The segment at 212–257 adopts an RING-type zinc-finger fold; it reads CNVCKEISTDERFLKPKECCEYAICNACCVNMWKTATTHAKCPACR.

In terms of assembly, interacts with proteins C42 and FP25. Interacts with host beta-tubulin. Interacts with Ac66 and vUb.

Its subcellular location is the host nucleus. The protein localises to the host cytoplasm. The protein resides in the virion. Putative viral E3 ligase that plays an essential regulatory role in both viral DNA replication and transcriptional transactivation. The role in transcription has been shown to include activation of gene expression from early viral promoters. Also promotes the efficient egress of nucleocapsids from the host nucleus. May act as an E3 ligase that promotes ubiquitination of nucleocapsids proteins by vUbi and subsequent viral egress for the host nucleus. This is Immediate-early protein IE-0 (IE0) from Lepidoptera (butterflies and moths).